The following is a 232-amino-acid chain: Sugar fermentation stimulation protein homolog (232 aa).

Belongs to the SfsA family.

The chain is Sugar fermentation stimulation protein homolog from Acidithiobacillus ferrooxidans (strain ATCC 23270 / DSM 14882 / CIP 104768 / NCIMB 8455) (Ferrobacillus ferrooxidans (strain ATCC 23270)).